The following is an 806-amino-acid chain: Protein translocase subunit SecA (806 aa).

ATP contacts are provided by residues glutamine 87, 105-109 (GEGKT), and aspartate 493.

This sequence belongs to the SecA family. Monomer and homodimer. Part of the essential Sec protein translocation apparatus which comprises SecA, SecYEG and auxiliary proteins SecDF. Other proteins may also be involved.

It is found in the cell membrane. It localises to the cytoplasm. It carries out the reaction ATP + H2O + cellular proteinSide 1 = ADP + phosphate + cellular proteinSide 2.. Its function is as follows. Part of the Sec protein translocase complex. Interacts with the SecYEG preprotein conducting channel. Has a central role in coupling the hydrolysis of ATP to the transfer of proteins into and across the cell membrane, serving as an ATP-driven molecular motor driving the stepwise translocation of polypeptide chains across the membrane. The polypeptide is Protein translocase subunit SecA (Mycoplasma genitalium (strain ATCC 33530 / DSM 19775 / NCTC 10195 / G37) (Mycoplasmoides genitalium)).